Here is a 556-residue protein sequence, read N- to C-terminus: Transcription factor IIIB 70 kDa subunit (556 aa).

Residues 8–41 (SSRKCKNCGSTDFVRDISNTTNELICKVCGLVTE) form a TFIIB-type zinc finger. The Zn(2+) site is built by Cys-12, Cys-15, Cys-33, and Cys-36. 2 consecutive repeat copies span residues 98 to 174 (LKAV…TFLK) and 193 to 272 (IQHF…RLNE). The tract at residues 98 to 272 (LKAVSYALNI…EETLQQRLNE (175 aa)) is interaction with TBP and with the Pol III subunit C34. Residues 284 to 556 (KEFRDDETEV…DAINGLFGQK (273 aa)) form an interaction with TBP region. Disordered stretches follow at residues 287–309 (RDDETEVNEGERSAESKPPSFDK) and 477–501 (ADLASGNTSLRKKRSKRTNRNQSSA). The span at 295–309 (EGERSAESKPPSFDK) shows a compositional bias: basic and acidic residues. Positions 486–495 (LRKKRSKRTN) are enriched in basic residues.

Belongs to the TFIIB family. In terms of assembly, TFIIIB comprises the TATA-binding protein (TBP), the B-related factor (BRF) and a 70 kDa polypeptide.

It localises to the nucleus. Its function is as follows. General activator of RNA polymerase III transcription. Interacts with TBP. Binds to Pol III subunit C34 and to the TAU135 component of TFIIIC. The polypeptide is Transcription factor IIIB 70 kDa subunit (TDS4) (Kluyveromyces lactis (strain ATCC 8585 / CBS 2359 / DSM 70799 / NBRC 1267 / NRRL Y-1140 / WM37) (Yeast)).